A 277-amino-acid chain; its full sequence is Pantothenate synthetase (277 aa).

An ATP-binding site is contributed by 28-35 (MGALHSGH). Histidine 35 (proton donor) is an active-site residue. Glutamine 59 serves as a coordination point for (R)-pantoate. Position 59 (glutamine 59) interacts with beta-alanine. Residues 145–148 (GEKD), valine 174, and 182–185 (LSSR) contribute to the ATP site.

This sequence belongs to the pantothenate synthetase family. Homodimer.

Its subcellular location is the cytoplasm. The enzyme catalyses (R)-pantoate + beta-alanine + ATP = (R)-pantothenate + AMP + diphosphate + H(+). It functions in the pathway cofactor biosynthesis; (R)-pantothenate biosynthesis; (R)-pantothenate from (R)-pantoate and beta-alanine: step 1/1. Its function is as follows. Catalyzes the condensation of pantoate with beta-alanine in an ATP-dependent reaction via a pantoyl-adenylate intermediate. This Anaplasma marginale (strain St. Maries) protein is Pantothenate synthetase.